The chain runs to 255 residues: Phosphatidylcholine synthase (255 aa).

At 1-13 (MNPIKPPFTLNQY) the chain is on the cytoplasmic side. Residues 14-34 (FAAWFVHVFTASAACIGVFSL) traverse the membrane as a helical segment. Topologically, residues 35–42 (YKIYQHDY) are periplasmic. A helical membrane pass occupies residues 43 to 63 (VFALWLMAITVFIDAVDGSLA). The Cytoplasmic segment spans residues 64–76 (RLVHVKSVLPKID). Residues 77-97 (GALLDNIVDYLNYVITPCFFL) form a helical membrane-spanning segment. Residues 98-103 (LVKPGM) lie on the Periplasmic side of the membrane. Residues 104-124 (LPADYVVPITAAITITSAYQF) traverse the membrane as a helical segment. Residues 125 to 133 (CQDDAKTPD) lie on the Cytoplasmic side of the membrane. The chain crosses the membrane as a helical span at residues 134–154 (HFFKGFPCYWNITVFYMYIFN). Position 155 (Thr-155) is a topological domain, periplasmic. A helical transmembrane segment spans residues 156 to 175 (SMIVNTVLLSLFCVLIFIPV). At 176–190 (KYVYPSRLDYLTESR) the chain is on the cytoplasmic side. The helical transmembrane segment at 191-211 (VLKILMHCCSALYGISSFCLL) threads the bilayer. At 212–217 (VNYPET) the chain is on the periplasmic side. A helical membrane pass occupies residues 218–238 (NKLWVSLSLGYVGMYLFLSFY). The Cytoplasmic segment spans residues 239–255 (RTYYPMFKAKITANNKD).

The protein belongs to the CDP-alcohol phosphatidyltransferase class-I family. Mn(2+) is required as a cofactor.

The protein resides in the cell inner membrane. The catalysed reaction is a CDP-1,2-diacyl-sn-glycerol + choline = a 1,2-diacyl-sn-glycero-3-phosphocholine + CMP + H(+). Functionally, condenses choline with CDP-diglyceride to produce phosphatidylcholine and CMP. Affects virulence of this bacterium when there is a complete loss of phosphatidylcholine formation due to absence of both the synthase (pcs) and the methylation (pmtA) pathways. Reduced virulence results from lowered yields of bacteria within host macrophages and because of loss of high multiplicity cytotoxicity. This Legionella pneumophila subsp. pneumophila (strain Philadelphia 1 / ATCC 33152 / DSM 7513) protein is Phosphatidylcholine synthase.